The chain runs to 697 residues: Potassium-transporting ATPase ATP-binding subunit (697 aa).

The next 4 helical transmembrane spans lie at Pro-55–Ser-75, Ser-79–Ala-99, Leu-245–Phe-265, and Val-271–Ile-291. Asp-324 acts as the 4-aspartylphosphate intermediate in catalysis. ATP-binding positions include Asp-361, Glu-365, Phe-393–Ser-400, and Lys-412. Mg(2+)-binding residues include Asp-535 and Asp-539. 3 helical membrane-spanning segments follow: residues Phe-605–Met-625, Ala-633–Met-653, and Gly-677–Ile-697.

It belongs to the cation transport ATPase (P-type) (TC 3.A.3) family. Type IA subfamily. In terms of assembly, the system is composed of three essential subunits: KdpA, KdpB and KdpC.

It is found in the cell membrane. It carries out the reaction K(+)(out) + ATP + H2O = K(+)(in) + ADP + phosphate + H(+). In terms of biological role, part of the high-affinity ATP-driven potassium transport (or Kdp) system, which catalyzes the hydrolysis of ATP coupled with the electrogenic transport of potassium into the cytoplasm. This subunit is responsible for energy coupling to the transport system and for the release of the potassium ions to the cytoplasm. This is Potassium-transporting ATPase ATP-binding subunit from Bacillus cereus (strain G9842).